Reading from the N-terminus, the 134-residue chain is Small ribosomal subunit protein uS11 (134 aa).

The disordered stretch occupies residues Thr115–Lys134. Residues Pro124–Lys134 show a composition bias toward basic residues.

It belongs to the universal ribosomal protein uS11 family. In terms of assembly, part of the 30S ribosomal subunit. Interacts with proteins S7 and S18. Binds to IF-3.

In terms of biological role, located on the platform of the 30S subunit, it bridges several disparate RNA helices of the 16S rRNA. Forms part of the Shine-Dalgarno cleft in the 70S ribosome. This is Small ribosomal subunit protein uS11 from Mycoplasma mobile (strain ATCC 43663 / 163K / NCTC 11711) (Mesomycoplasma mobile).